A 339-amino-acid chain; its full sequence is Ketol-acid reductoisomerase (NADP(+)) (339 aa).

The KARI N-terminal Rossmann domain maps to 1–182 (MRVYYDRDAD…GGGRSGIIET (182 aa)). NADP(+) contacts are provided by residues 24-27 (YGSQ), Lys-48, Ser-51, Thr-53, and 83-86 (DELQ). Residue His-108 is part of the active site. An NADP(+)-binding site is contributed by Gly-134. A KARI C-terminal knotted domain is found at 183-328 (NFKEECETDL…AKLRGMMPWI (146 aa)). Positions 191, 195, 227, and 231 each coordinate Mg(2+). Ser-252 provides a ligand contact to substrate.

Belongs to the ketol-acid reductoisomerase family. Requires Mg(2+) as cofactor.

It catalyses the reaction (2R)-2,3-dihydroxy-3-methylbutanoate + NADP(+) = (2S)-2-acetolactate + NADPH + H(+). The enzyme catalyses (2R,3R)-2,3-dihydroxy-3-methylpentanoate + NADP(+) = (S)-2-ethyl-2-hydroxy-3-oxobutanoate + NADPH + H(+). It functions in the pathway amino-acid biosynthesis; L-isoleucine biosynthesis; L-isoleucine from 2-oxobutanoate: step 2/4. Its pathway is amino-acid biosynthesis; L-valine biosynthesis; L-valine from pyruvate: step 2/4. Functionally, involved in the biosynthesis of branched-chain amino acids (BCAA). Catalyzes an alkyl-migration followed by a ketol-acid reduction of (S)-2-acetolactate (S2AL) to yield (R)-2,3-dihydroxy-isovalerate. In the isomerase reaction, S2AL is rearranged via a Mg-dependent methyl migration to produce 3-hydroxy-3-methyl-2-ketobutyrate (HMKB). In the reductase reaction, this 2-ketoacid undergoes a metal-dependent reduction by NADPH to yield (R)-2,3-dihydroxy-isovalerate. In Sinorhizobium medicae (strain WSM419) (Ensifer medicae), this protein is Ketol-acid reductoisomerase (NADP(+)).